We begin with the raw amino-acid sequence, 550 residues long: Chaperonin GroEL (550 aa).

ATP is bound by residues 30 to 33, lysine 51, 87 to 91, glycine 415, 481 to 483, and aspartate 497; these read TLGP, DGTTT, and NAA.

This sequence belongs to the chaperonin (HSP60) family. Forms a cylinder of 14 subunits composed of two heptameric rings stacked back-to-back. Interacts with the co-chaperonin GroES.

The protein resides in the cytoplasm. It carries out the reaction ATP + H2O + a folded polypeptide = ADP + phosphate + an unfolded polypeptide.. Together with its co-chaperonin GroES, plays an essential role in assisting protein folding. The GroEL-GroES system forms a nano-cage that allows encapsulation of the non-native substrate proteins and provides a physical environment optimized to promote and accelerate protein folding. The protein is Chaperonin GroEL of Photobacterium profundum (strain SS9).